Here is a 296-residue protein sequence, read N- to C-terminus: NAD kinase (296 aa).

Asp72 (proton acceptor) is an active-site residue. NAD(+) is bound by residues 72–73 (DG), 146–147 (ND), Arg157, Lys174, Asp176, 187–192 (TAYALS), and Gln247.

Belongs to the NAD kinase family. Requires a divalent metal cation as cofactor.

It localises to the cytoplasm. The enzyme catalyses NAD(+) + ATP = ADP + NADP(+) + H(+). Involved in the regulation of the intracellular balance of NAD and NADP, and is a key enzyme in the biosynthesis of NADP. Catalyzes specifically the phosphorylation on 2'-hydroxyl of the adenosine moiety of NAD to yield NADP. The sequence is that of NAD kinase from Pseudomonas savastanoi pv. phaseolicola (strain 1448A / Race 6) (Pseudomonas syringae pv. phaseolicola (strain 1448A / Race 6)).